The sequence spans 150 residues: Large ribosomal subunit protein bL9 (150 aa).

It belongs to the bacterial ribosomal protein bL9 family.

Its function is as follows. Binds to the 23S rRNA. This chain is Large ribosomal subunit protein bL9, found in Leuconostoc mesenteroides subsp. mesenteroides (strain ATCC 8293 / DSM 20343 / BCRC 11652 / CCM 1803 / JCM 6124 / NCDO 523 / NBRC 100496 / NCIMB 8023 / NCTC 12954 / NRRL B-1118 / 37Y).